A 196-amino-acid chain; its full sequence is Dephospho-CoA kinase (196 aa).

The DPCK domain maps to 5–196 (IIGLTGGIAT…QVDIALNFEL (192 aa)). 13 to 18 (ATGKTT) is an ATP binding site.

Belongs to the CoaE family.

The protein resides in the cytoplasm. The catalysed reaction is 3'-dephospho-CoA + ATP = ADP + CoA + H(+). The protein operates within cofactor biosynthesis; coenzyme A biosynthesis; CoA from (R)-pantothenate: step 5/5. Functionally, catalyzes the phosphorylation of the 3'-hydroxyl group of dephosphocoenzyme A to form coenzyme A. The chain is Dephospho-CoA kinase from Nostoc sp. (strain PCC 7120 / SAG 25.82 / UTEX 2576).